Here is a 409-residue protein sequence, read N- to C-terminus: MQPPIPAPLKHVSRTPATPAVAKALTRLQCWPGEQRVAVGLSGGVDSSLSAALLVEAGWQVEGLTLWLMSGKGACCSDGLIDAAGICEQLKIPHHVVDSRATFQAEIVDQLVQGYQQGVTPLPCSRCNRSVKFAEMLSWAKKELQLHRVATGHYARIRHREDPEPQQALPGDSIGRHQLLRGLDQNKDQSYFLYDLSQDVLAKVIFPLGELTKAETRQEAERYGLRTAKKEESQDLCLADHYGSMKAFLDNYLPARQGEIVLQDGKVVGEHDGIEHFTIGQRKGLGVAWREPLHVVQLDAAANRVIVAPRAEAGRDNCVVGAVNWISMAPPSTTINVEVQVRYRSGPVAAQLTPIEATAEDIAADRPHRCRLTFNEKQFSITPGQAAVFYAADTVLGGGLIQQVNTASS.

ATP contacts are provided by residues 40–47 and leucine 66; that span reads GLSGGVDS. Cysteine 127 serves as the catalytic Nucleophile. A disulfide bridge links cysteine 127 with cysteine 237. Glycine 152 serves as a coordination point for ATP. The segment at 187 to 189 is interaction with tRNA; that stretch reads KDQ. Residue cysteine 237 is the Cysteine persulfide intermediate of the active site. The interaction with tRNA stretch occupies residues 342-343; it reads RY.

The protein belongs to the MnmA/TRMU family.

The protein localises to the cytoplasm. The enzyme catalyses S-sulfanyl-L-cysteinyl-[protein] + uridine(34) in tRNA + AH2 + ATP = 2-thiouridine(34) in tRNA + L-cysteinyl-[protein] + A + AMP + diphosphate + H(+). Catalyzes the 2-thiolation of uridine at the wobble position (U34) of tRNA, leading to the formation of s(2)U34. This chain is tRNA-specific 2-thiouridylase MnmA, found in Prochlorococcus marinus (strain MIT 9313).